Here is a 163-residue protein sequence, read N- to C-terminus: Crossover junction endodeoxyribonuclease RuvC (163 aa).

Residues Asp-7, Glu-67, and Asp-140 contribute to the active site. Asp-7, Glu-67, and Asp-140 together coordinate Mg(2+).

It belongs to the RuvC family. As to quaternary structure, homodimer which binds Holliday junction (HJ) DNA. The HJ becomes 2-fold symmetrical on binding to RuvC with unstacked arms; it has a different conformation from HJ DNA in complex with RuvA. In the full resolvosome a probable DNA-RuvA(4)-RuvB(12)-RuvC(2) complex forms which resolves the HJ. Mg(2+) is required as a cofactor.

The protein resides in the cytoplasm. The enzyme catalyses Endonucleolytic cleavage at a junction such as a reciprocal single-stranded crossover between two homologous DNA duplexes (Holliday junction).. Its function is as follows. The RuvA-RuvB-RuvC complex processes Holliday junction (HJ) DNA during genetic recombination and DNA repair. Endonuclease that resolves HJ intermediates. Cleaves cruciform DNA by making single-stranded nicks across the HJ at symmetrical positions within the homologous arms, yielding a 5'-phosphate and a 3'-hydroxyl group; requires a central core of homology in the junction. The consensus cleavage sequence is 5'-(A/T)TT(C/G)-3'. Cleavage occurs on the 3'-side of the TT dinucleotide at the point of strand exchange. HJ branch migration catalyzed by RuvA-RuvB allows RuvC to scan DNA until it finds its consensus sequence, where it cleaves and resolves the cruciform DNA. The polypeptide is Crossover junction endodeoxyribonuclease RuvC (Desulforamulus reducens (strain ATCC BAA-1160 / DSM 100696 / MI-1) (Desulfotomaculum reducens)).